We begin with the raw amino-acid sequence, 84 residues long: Delta-thalatoxin-Tas1a (84 aa).

Positions 1–19 are cleaved as a signal peptide; it reads MAYLKIVLVALMLVLAVSA. The propeptide occupies 20-33; the sequence is MRRPDQQDQDISVA. Disulfide bonds link C38/C78, C40/C68, and C61/C79.

Belongs to the sea anemone sodium channel inhibitory toxin family. Type II subfamily.

It localises to the secreted. The protein localises to the nematocyst. Binds specifically to the voltage-gated sodium channel (Nav) and delays its inactivation. The sequence is that of Delta-thalatoxin-Tas1a from Thalassianthus aster (Fuzzy-tipped anemone).